The primary structure comprises 514 residues: Probable outer membrane protein pmp12 (514 aa).

An N-terminal signal peptide occupies residues 1–21; it reads MTILRNFLTCSALFLALPAAA.

It belongs to the PMP outer membrane protein family.

It localises to the secreted. The protein localises to the cell wall. It is found in the cell outer membrane. This Chlamydia pneumoniae (Chlamydophila pneumoniae) protein is Probable outer membrane protein pmp12 (pmp12).